A 255-amino-acid chain; its full sequence is Protein DOG1-like 2 (255 aa).

The DOG1 domain occupies 10–246 (EKLQKRCYHE…HDRGRVRADV (237 aa)).

The chain is Protein DOG1-like 2 from Arabidopsis thaliana (Mouse-ear cress).